Reading from the N-terminus, the 130-residue chain is uncharacterized protein (130 aa).

The next 3 membrane-spanning stretches (helical) occupy residues 34–54 (AILIIAFGAGIIYIVPYFAFF), 73–93 (LLLTAYGIVSLLFYIPGGWLA), and 107–127 (FGTGIITFWYFLVGLKGIVWI).

Its subcellular location is the cell membrane. This is an uncharacterized protein from Mycoplasma pneumoniae (strain ATCC 29342 / M129 / Subtype 1) (Mycoplasmoides pneumoniae).